The primary structure comprises 310 residues: Ribonuclease Z (310 aa).

Zn(2+) contacts are provided by H60, H62, D64, H65, H140, D209, and H269. Catalysis depends on D64, which acts as the Proton acceptor.

The protein belongs to the RNase Z family. Homodimer. The cofactor is Zn(2+).

It carries out the reaction Endonucleolytic cleavage of RNA, removing extra 3' nucleotides from tRNA precursor, generating 3' termini of tRNAs. A 3'-hydroxy group is left at the tRNA terminus and a 5'-phosphoryl group is left at the trailer molecule.. In terms of biological role, zinc phosphodiesterase, which displays some tRNA 3'-processing endonuclease activity. Probably involved in tRNA maturation, by removing a 3'-trailer from precursor tRNA. This is Ribonuclease Z from Methanococcus maripaludis (strain C7 / ATCC BAA-1331).